Here is a 345-residue protein sequence, read N- to C-terminus: UDP-N-acetylenolpyruvoylglucosamine reductase (345 aa).

The FAD-binding PCMH-type domain occupies 59–254 (VGGPAACLAR…RKATQPLGRP (196 aa)). Arg209 is a catalytic residue. Cys258 (proton donor) is an active-site residue. The active site involves Glu328.

It belongs to the MurB family. FAD is required as a cofactor.

It localises to the cytoplasm. It carries out the reaction UDP-N-acetyl-alpha-D-muramate + NADP(+) = UDP-N-acetyl-3-O-(1-carboxyvinyl)-alpha-D-glucosamine + NADPH + H(+). It participates in cell wall biogenesis; peptidoglycan biosynthesis. Functionally, cell wall formation. The sequence is that of UDP-N-acetylenolpyruvoylglucosamine reductase from Syntrophobacter fumaroxidans (strain DSM 10017 / MPOB).